The sequence spans 762 residues: uncharacterized protein (762 aa).

The disordered stretch occupies residues 734 to 762 (QQRPRVAAAAPPPPPQPPAAAVPTTQAST). A compositionally biased stretch (pro residues) spans 743–753 (APPPPPQPPAA).

This is an uncharacterized protein from Ostreid herpesvirus 1 (isolate France) (OsHV-1).